The following is a 220-amino-acid chain: MSMGLEITGTALAVLGWLGTIVCCALPMWRVSAFIGSNIITSQNIWEGLWMNCVVQSTGQMQCKVYDSLLALPQDLQAARALIVVAILLAAFGLLVALVGAQCTNCVQDDTAKAKITIVAGVLFLLAALLTLVPVSWSANTIIRDFYNPVVPEAQKREMGAGLYVGWAAAALQLLGGALLCCSCPPREKKYTATKVVYSAPRSTGPGASLGTGYDRKDYV.

Residues 1–8 (MSMGLEIT) are Cytoplasmic-facing. A helical transmembrane segment spans residues 9 to 29 (GTALAVLGWLGTIVCCALPMW). Residues 30-80 (RVSAFIGSNIITSQNIWEGLWMNCVVQSTGQMQCKVYDSLLALPQDLQAAR) are Extracellular-facing. Residues 81 to 101 (ALIVVAILLAAFGLLVALVGA) form a helical membrane-spanning segment. The Cytoplasmic segment spans residues 102-115 (QCTNCVQDDTAKAK). A helical transmembrane segment spans residues 116 to 136 (ITIVAGVLFLLAALLTLVPVS). Topologically, residues 137-159 (WSANTIIRDFYNPVVPEAQKREM) are extracellular. Residues 160–180 (GAGLYVGWAAAALQLLGGALL) traverse the membrane as a helical segment. Topologically, residues 181–220 (CCSCPPREKKYTATKVVYSAPRSTGPGASLGTGYDRKDYV) are cytoplasmic. At Tyr-198 the chain carries Phosphotyrosine. 2 positions are modified to phosphoserine: Ser-199 and Ser-209. Positions 219 to 220 (YV) are interactions with TJP1, TJP2 and TJP3.

Belongs to the claudin family. As to quaternary structure, can form homo- and heteropolymers with other CLDN. Homopolymers interact with CLDN1 and CLDN2 homopolymers. Interacts in cis (within the same plasma membrane) with CLDN19. Directly interacts with TJP1/ZO-1, TJP2/ZO-2 and TJP3/ZO-3.

It localises to the cell junction. It is found in the tight junction. The protein localises to the cell membrane. Barrier-forming claudin. Plays a major role in tight junction-specific obliteration of the intercellular space, through calcium-independent cell-adhesion activity. This is Claudin-3 (CLDN3) from Homo sapiens (Human).